We begin with the raw amino-acid sequence, 704 residues long: Tetratricopeptide repeat protein 12 (704 aa).

A Phosphothreonine modification is found at Thr71. TPR repeat units follow at residues 105–138 (ADAL…LKDM), 139–172 (KVLY…DENC), and 173–206 (TKAY…NPKL).

Its subcellular location is the cytoplasm. Cytoplasmic protein that plays a role in the proper assembly of dynein arm complexes in motile cilia in both respiratory cells and sperm flagella. The protein is Tetratricopeptide repeat protein 12 (Ttc12) of Mus musculus (Mouse).